We begin with the raw amino-acid sequence, 430 residues long: MSMITEIYAREILDSRGNPTVEVEVYTEDGGFGRALVPSGASTGEHEAVELRDGDKSRYLGKGVLKAVDNVNEKLAPEIIGYDVFDQAGIDKKMIDLDGTKNKGNFGANAILGISMAAARAAADELGLPLYTYLGGFNAKTLPTPMMNIINGGSHADNNVDFQEFMIMPVGAPTFKEALRMGAEIFHALKSVLSGMGLNTAVGDEGGFAPNLKSNEEAITVILEAIEKAGYKAGEDVYLAMDVASSEFYDKAAGKYNLAGEGKVLSTEELVEFYAQLVDKYPIISIEDGCDENDWDGHKLLTDRIGHKVQLVGDDLFVTNTEKLAEGIEKGIANSILIKVNQIGTLTETFDAIEMAKKAGYTAVVSHRSGETEDSTIADIAVATNAGQIKTGSLSRTDRIAKYNQLLRIEDMLSDVAVYDGIKSFYNLKK.

Glutamine 163 is a (2R)-2-phosphoglycerate binding site. The Proton donor role is filled by glutamate 205. 3 residues coordinate Mg(2+): aspartate 242, glutamate 287, and aspartate 314. (2R)-2-phosphoglycerate-binding residues include lysine 339, arginine 368, serine 369, and lysine 390. Lysine 339 functions as the Proton acceptor in the catalytic mechanism.

It belongs to the enolase family. It depends on Mg(2+) as a cofactor.

It is found in the cytoplasm. Its subcellular location is the secreted. It localises to the cell surface. It catalyses the reaction (2R)-2-phosphoglycerate = phosphoenolpyruvate + H2O. It functions in the pathway carbohydrate degradation; glycolysis; pyruvate from D-glyceraldehyde 3-phosphate: step 4/5. Functionally, catalyzes the reversible conversion of 2-phosphoglycerate (2-PG) into phosphoenolpyruvate (PEP). It is essential for the degradation of carbohydrates via glycolysis. This is Enolase from Exiguobacterium sibiricum (strain DSM 17290 / CCUG 55495 / CIP 109462 / JCM 13490 / 255-15).